The following is a 67-amino-acid chain: Conotoxin ArMLCL-012 (67 aa).

The N-terminal stretch at 1–19 (MLCLPVFIILLLLASPAAS) is a signal peptide. Residues 20-45 (NPLEKRIQSDLIRAALEDADTKNDPR) constitute a propeptide that is removed on maturation. Cys64 carries the post-translational modification Cysteine amide.

Belongs to the conotoxin T superfamily. Contains 2 disulfide bonds that can be either 'C1-C3, C2-C4' or 'C1-C4, C2-C3', since these disulfide connectivities have been observed for conotoxins with cysteine framework V (for examples, see AC P0DQQ7 and AC P81755). In terms of tissue distribution, expressed by the venom duct.

It localises to the secreted. The protein is Conotoxin ArMLCL-012 of Conus arenatus (Sand-dusted cone).